Consider the following 561-residue polypeptide: Putative transport protein DNO_0009 (561 aa).

Helical transmembrane passes span 4 to 24 (VAITICILSLVASLGLWLGNI), 29 to 49 (VGLSIGGVLFGGIIISHIMNL), 74 to 94 (FGLILFVYTIGIQVGPGFFAS), 104 to 124 (AFAALIVLLGGLCSVILYYLF), and 166 to 186 (MGYAIAYPFGIIGVLLAMWLI). RCK C-terminal domains lie at 198–283 (LQFF…ILGE) and 285–369 (AGHE…LIGN). 6 helical membrane-spanning segments follow: residues 379 to 399 (MLPVFIGIGLGVLLGSIPIYL), 411 to 433 (AGGPLVVALVLARIGSIGKLYWF), 447 to 467 (IVLFLSVIGIHAGEHFFSTLL), 472 to 492 (FSWICYGAIITLLPLLIAGII), 501 to 521 (YLTICGLLAGAMTDTPALAFA), and 538 to 558 (VYPLTTFLRIMLPQLIAVLLW).

The protein belongs to the AAE transporter (TC 2.A.81) family. YidE subfamily.

The protein localises to the cell membrane. This is Putative transport protein DNO_0009 from Dichelobacter nodosus (strain VCS1703A).